The sequence spans 129 residues: MAQSRERLAEEYSVLAQVAEELQREIQLAQTLIAEVDSAILALKNISSLEDGKEILVPVSAGVYVRASIKRQEKFLVAIGSNILVEKSLDEAVEFLNKRKEELSQLVERRMNDLNKVVARIREIESSIR.

The protein belongs to the prefoldin alpha subunit family. Heterohexamer of two alpha and four beta subunits.

The protein resides in the cytoplasm. Functionally, molecular chaperone capable of stabilizing a range of proteins. Seems to fulfill an ATP-independent, HSP70-like function in archaeal de novo protein folding. The sequence is that of Prefoldin subunit alpha from Thermofilum pendens (strain DSM 2475 / Hrk 5).